A 283-amino-acid chain; its full sequence is Acetylglutamate kinase (283 aa).

Substrate contacts are provided by residues 64–65 (GG), arginine 86, and asparagine 178.

It belongs to the acetylglutamate kinase family. ArgB subfamily.

The protein localises to the cytoplasm. It catalyses the reaction N-acetyl-L-glutamate + ATP = N-acetyl-L-glutamyl 5-phosphate + ADP. The protein operates within amino-acid biosynthesis; L-arginine biosynthesis; N(2)-acetyl-L-ornithine from L-glutamate: step 2/4. Catalyzes the ATP-dependent phosphorylation of N-acetyl-L-glutamate. This Lactococcus lactis subsp. cremoris (strain SK11) protein is Acetylglutamate kinase.